The sequence spans 234 residues: HTH-type transcriptional regulator SmoD (234 aa).

An HTH gntR-type domain is found at 8–76 (LPMYMQIAEM…QGSGNYIRAV (69 aa)). Residues 36 to 55 (ERDMAADLGIAVGTLRKSLA) constitute a DNA-binding region (H-T-H motif).

The protein localises to the cytoplasm. Probably regulates expression of genes involved in the sulfoquinovose monooxygenase (sulfo-SMO) pathway (smoABCDEFGHI). This chain is HTH-type transcriptional regulator SmoD, found in Agrobacterium fabrum (strain C58 / ATCC 33970) (Agrobacterium tumefaciens (strain C58)).